Consider the following 432-residue polypeptide: Short/branched chain specific acyl-CoA dehydrogenase, mitochondrial (432 aa).

Residues 1–33 (MAVSAFQLWRAGGLLRRNFLTHSSSWKIPPRVL) constitute a mitochondrion transit peptide. Lys-70 carries the post-translational modification N6-acetyllysine; alternate. N6-succinyllysine; alternate is present on Lys-70. Residues 174-183 (FCLSEAGAGS) and 207-209 (WIS) contribute to the FAD site. A substrate-binding site is contributed by Ser-183. Phosphoserine is present on Ser-183. Tyr-229 provides a ligand contact to substrate. Lys-278 carries the post-translational modification N6-succinyllysine. Tyr-283 lines the substrate pocket. At Lys-284 the chain carries N6-acetyllysine; alternate. Lys-284 bears the N6-succinyllysine; alternate mark. 291–294 (NEGR) provides a ligand contact to substrate. FAD contacts are provided by residues Arg-319, Gln-330, and 387–391 (EWMGG). The active-site Proton acceptor is the Glu-414. 416–418 (TSN) is an FAD binding site. Position 426 is an N6-acetyllysine (Lys-426).

This sequence belongs to the acyl-CoA dehydrogenase family. As to quaternary structure, homotetramer. FAD is required as a cofactor. As to expression, ubiquitously expressed.

The protein localises to the mitochondrion matrix. It carries out the reaction 2-methylbutanoyl-CoA + oxidized [electron-transfer flavoprotein] + H(+) = (2E)-2-methylbut-2-enoyl-CoA + reduced [electron-transfer flavoprotein]. The enzyme catalyses (2S)-2-methylbutanoyl-CoA + oxidized [electron-transfer flavoprotein] + H(+) = (2E)-2-methylbut-2-enoyl-CoA + reduced [electron-transfer flavoprotein]. The catalysed reaction is (2R)-2-methylbutanoyl-CoA + oxidized [electron-transfer flavoprotein] + H(+) = ethylacryloyl-CoA + reduced [electron-transfer flavoprotein]. It catalyses the reaction butanoyl-CoA + oxidized [electron-transfer flavoprotein] + H(+) = (2E)-butenoyl-CoA + reduced [electron-transfer flavoprotein]. It carries out the reaction 2-methylpropanoyl-CoA + oxidized [electron-transfer flavoprotein] + H(+) = 2-methylpropenoyl-CoA + reduced [electron-transfer flavoprotein]. The enzyme catalyses hexanoyl-CoA + oxidized [electron-transfer flavoprotein] + H(+) = (2E)-hexenoyl-CoA + reduced [electron-transfer flavoprotein]. The catalysed reaction is valproyl-CoA + oxidized [electron-transfer flavoprotein] + H(+) = (2E)-2-propylpent-2-enoyl-CoA + reduced [electron-transfer flavoprotein]. It participates in lipid metabolism; mitochondrial fatty acid beta-oxidation. Its pathway is amino-acid degradation; L-isoleucine degradation. Its activity is regulated as follows. Inhibited by N-ethylmaleimide, hydroxymercuribenzoate, methyl mercury iodide and heavy metals such as Hg2+, Cu2+, and Ag2+. Short and branched chain specific acyl-CoA dehydrogenase that catalyzes the removal of one hydrogen from C-2 and C-3 of the fatty acyl-CoA thioester, resulting in the formation of trans-2-enoyl-CoA. Among the different mitochondrial acyl-CoA dehydrogenases, acts specifically on short and branched chain acyl-CoA derivatives such as (S)-2-methylbutyryl-CoA as well as short straight chain acyl-CoAs such as butyryl-CoA. Plays an important role in the metabolism of L-isoleucine by catalyzing the dehydrogenation of 2-methylbutyryl-CoA, one of the steps of the L-isoleucine catabolic pathway. Can also act on valproyl-CoA, a metabolite of the valproic acid drug. The sequence is that of Short/branched chain specific acyl-CoA dehydrogenase, mitochondrial from Rattus norvegicus (Rat).